The chain runs to 138 residues: MIKCTRRIDFDAGHRIIGHKNKCQFLHGHHYVLEITIAANKTDKLGMVIDFGLIKNLAKKWIDANFDHNLILHQDDKEIGKQIENYTGQKIYYMRNNPTAENIAIHLKNEIFPKLFIDQNFFVTSLKLYETQNCFVEV.

His14 contributes to the Zn(2+) binding site. Cys23 functions as the Proton acceptor in the catalytic mechanism. Positions 27 and 29 each coordinate Zn(2+). Residues His68 and Glu130 each act as charge relay system in the active site.

Belongs to the PTPS family. QueD subfamily. Zn(2+) is required as a cofactor.

The enzyme catalyses 7,8-dihydroneopterin 3'-triphosphate + H2O = 6-carboxy-5,6,7,8-tetrahydropterin + triphosphate + acetaldehyde + 2 H(+). It functions in the pathway purine metabolism; 7-cyano-7-deazaguanine biosynthesis. Functionally, catalyzes the conversion of 7,8-dihydroneopterin triphosphate (H2NTP) to 6-carboxy-5,6,7,8-tetrahydropterin (CPH4) and acetaldehyde. The protein is 6-carboxy-5,6,7,8-tetrahydropterin synthase (queD) of Rickettsia typhi (strain ATCC VR-144 / Wilmington).